The following is a 279-amino-acid chain: Cytochrome c1 (279 aa).

A signal peptide spans 1 to 21; the sequence is MKKLLISAVSALVLGSGAAFA. Heme c-binding residues include Cys-55, Cys-58, His-59, and Met-204. Residues 248–266 form a helical membrane-spanning segment; it reads MGLVAMVMLGLLSVMLYLT.

In terms of assembly, the main subunits of complex b-c1 are: cytochrome b, cytochrome c1 and the Rieske protein. Binds 1 heme c group covalently per subunit.

The protein localises to the cell membrane. Functionally, component of the ubiquinol-cytochrome c reductase complex (complex III or cytochrome b-c1 complex), which is a respiratory chain that generates an electrochemical potential coupled to ATP synthesis. c1 functions as an electron donor to cytochrome c. The polypeptide is Cytochrome c1 (petC) (Rhodobacter capsulatus (strain ATCC BAA-309 / NBRC 16581 / SB1003)).